The primary structure comprises 263 residues: LIM and SH3 domain protein 1 (263 aa).

An N-acetylmethionine modification is found at M1. One can recognise an LIM zinc-binding domain in the interval 3-63 (PNCARCGKIV…NAHYPKQSFT (61 aa)). K42 carries the post-translational modification N6-acetyllysine. 2 Nebulin repeats span residues 64–95 (MVAD…KNKG) and 97–131 (GFSV…KSRM). The residue at position 68 (T68) is a Phosphothreonine. Position 75 is an N6-methyllysine (K75). The residue at position 99 (S99) is a Phosphoserine. T104 is modified (phosphothreonine). K112 carries the N6-succinyllysine modification. Phosphoserine is present on residues S118 and S134. The interval 122–207 (YHEEFEKSRM…QRSAPGGGGK (86 aa)) is disordered. The span at 148–162 (DSSSYRRPTEQQQPQ) shows a compositional bias: polar residues. The 60-residue stretch at 204 to 263 (GGGKRYRAVYDYSAADEDEVSFQDGDTIVNVQQIDDGWMYGTVERTGDTGMLPANYVEAI) folds into the SH3 domain.

As to quaternary structure, interacts with F-actin. Interacts with ANKRD54. Interacts with KBTBD10. Phosphorylated. Expressed in a wide range of tissues (but not the heart or skeletal muscle), the expression is specific for certain actin-rich cell types within these tissues. Expression is prominent in the cortical regions of ion-transporting duct cells in the pancreas, in the salivary parotid gland and in certain F-actin-rich cells in the distal tubule/collecting duct. In primary cultures of gastric fibroblasts, expression is mainly within the tips of lamellipodia and at the leading edges of membrane ruffles.

It is found in the cytoplasm. The protein resides in the cell cortex. Its subcellular location is the cytoskeleton. In terms of biological role, plays an important role in the regulation of dynamic actin-based, cytoskeletal activities. Agonist-dependent changes in LASP1 phosphorylation may also serve to regulate actin-associated ion transport activities, not only in the parietal cell but also in certain other F-actin-rich secretory epithelial cell types. This chain is LIM and SH3 domain protein 1, found in Rattus norvegicus (Rat).